The sequence spans 277 residues: 3-methyl-2-oxobutanoate hydroxymethyltransferase (277 aa).

The Mg(2+) site is built by aspartate 43 and aspartate 82. 3-methyl-2-oxobutanoate contacts are provided by residues 43 to 44 (DS), aspartate 82, and lysine 112. Glutamate 114 is a Mg(2+) binding site. The Proton acceptor role is filled by glutamate 181.

This sequence belongs to the PanB family. In terms of assembly, homodecamer; pentamer of dimers. Mg(2+) is required as a cofactor.

It is found in the cytoplasm. The catalysed reaction is 3-methyl-2-oxobutanoate + (6R)-5,10-methylene-5,6,7,8-tetrahydrofolate + H2O = 2-dehydropantoate + (6S)-5,6,7,8-tetrahydrofolate. The protein operates within cofactor biosynthesis; (R)-pantothenate biosynthesis; (R)-pantoate from 3-methyl-2-oxobutanoate: step 1/2. Functionally, catalyzes the reversible reaction in which hydroxymethyl group from 5,10-methylenetetrahydrofolate is transferred onto alpha-ketoisovalerate to form ketopantoate. In Exiguobacterium sp. (strain ATCC BAA-1283 / AT1b), this protein is 3-methyl-2-oxobutanoate hydroxymethyltransferase.